Here is a 230-residue protein sequence, read N- to C-terminus: Lactate utilization protein C (230 aa).

This sequence belongs to the LutC/YkgG family.

Its function is as follows. Is involved in L-lactate degradation and allows cells to grow with lactate as the sole carbon source. The polypeptide is Lactate utilization protein C (Halalkalibacterium halodurans (strain ATCC BAA-125 / DSM 18197 / FERM 7344 / JCM 9153 / C-125) (Bacillus halodurans)).